Here is a 494-residue protein sequence, read N- to C-terminus: Homeotic protein bicoid (494 aa).

3 disordered regions span residues M1–F49, R149–M210, and Q263–Q293. Basic residues predominate over residues P14–H40. A DNA-binding region (homeobox) is located at residues P97–S156. Basic and acidic residues predominate over residues I154–S163. Positions R433–F440 are RNA-binding.

This sequence belongs to the paired homeobox family. Bicoid subfamily. As to quaternary structure, interacts with Bin1; in vitro and yeast cells. Interacts with bin3. As to expression, maternal expression is an anterior cap concentrated in the cortical cytoplasm. Its transcript is produced maternally and sequestered near the anterior pole of the mature oocyte. After egg deposition, it is translated into protein, which diffuses toward the posterior, forming a long-range anterior gradient.

The protein localises to the nucleus. In terms of biological role, segment polarity transcription factor that provides positional cues for the development of head and thoracic segments. Forms a protein concentration gradient that patterns the anterior-posterior axis during embryogenesis and promotes the expression of anterior gap genes, such as hunchback (hb), ocelliless (oc), and buttonhead (btd). Binds to regulatory DNA sequences containing a 5'-TAATCC-3' sequence motif. Also binds RNA. Interacts with Bin1 to repress transcription of bicoid target genes in the anterior tip of the embryo; a process known as retraction. The protein is Homeotic protein bicoid of Drosophila melanogaster (Fruit fly).